The following is a 52-amino-acid chain: Ornatin-C (52 aa).

A Cell attachment site motif is present at residues 42 to 44; it reads RGD.

Belongs to the ornatin family.

It localises to the secreted. Functionally, potent inhibitor of fibrinogen interaction with platelet receptors expressed on glycoprotein IIb-IIIa complex. May prevent blood from clotting during either feeding and/or storage of ingested blood. The sequence is that of Ornatin-C from Placobdella ornata (Turtle leech).